The following is a 336-amino-acid chain: tRNA N6-adenosine threonylcarbamoyltransferase (336 aa).

Positions 114 and 118 each coordinate Fe cation. Residues 136–140 (LVSGG), aspartate 169, glycine 182, aspartate 186, and asparagine 275 each bind substrate. A Fe cation-binding site is contributed by aspartate 301.

Belongs to the KAE1 / TsaD family. Fe(2+) is required as a cofactor.

It is found in the cytoplasm. It catalyses the reaction L-threonylcarbamoyladenylate + adenosine(37) in tRNA = N(6)-L-threonylcarbamoyladenosine(37) in tRNA + AMP + H(+). Required for the formation of a threonylcarbamoyl group on adenosine at position 37 (t(6)A37) in tRNAs that read codons beginning with adenine. Is involved in the transfer of the threonylcarbamoyl moiety of threonylcarbamoyl-AMP (TC-AMP) to the N6 group of A37, together with TsaE and TsaB. TsaD likely plays a direct catalytic role in this reaction. In Streptococcus pneumoniae serotype 2 (strain D39 / NCTC 7466), this protein is tRNA N6-adenosine threonylcarbamoyltransferase.